The sequence spans 440 residues: MAGIPHDHYEPKTGFERWLHRRLPIVSLVYDTLMIPTPKNLNWWWIWGIVLAFCLVLQIATGIVLVMHYTPHVDLAFASVEHIMRDVNGGYMLRYLHANGASLFFLAVYIHIFRGLYYGSYKAPREVTWIVGMLIYLMMMGTAFMGYVLPWGQMSFWGATVITGLFGAIPGVGEAIQTWLLGGPAVDNPTLNRFFSLHYLLPFVIAALVVVHIWAFHTTGNNNPTGVEVRRGSKEEAKKDTLPFWPYFVIKDLFALAVVLVVFFAIVGFMPNYLGHPDNYIEANPLVTPAHIVPEWYFLPFYAILRAFTADVWVVMLVNWLSFGIIDAKFFGVIAMFGAILVMALVPWLDTSRVRSGQYRPLFKWWFWLLAVDFVVLMWVGAMPAEGIYPYIALAGSAYWFAYFLIILPLLGIIEKPDAMPQTIEEDFNAHYGPETHPAE.

Residues 46 to 66 (IWGIVLAFCLVLQIATGIVLV) form a helical membrane-spanning segment. Positions 97 and 111 each coordinate heme b. 9 consecutive transmembrane segments (helical) span residues 100–120 (GASLFFLAVYIHIFRGLYYGS), 129–149 (WIVGMLIYLMMMGTAFMGYVL), 156–176 (FWGATVITGLFGAIPGVGEAI), 194–214 (FFSLHYLLPFVIAALVVVHIW), 253–273 (LFALAVVLVVFFAIVGFMPNY), 296–315 (WYFLPFYAILRAFTADVWVV), 330–350 (FFGVIAMFGAILVMALVPWLD), 365–385 (WWFWLLAVDFVVLMWVGAMPA), and 394–414 (LAGSAYWFAYFLIILPLLGII). Heme b-binding residues include His-198 and His-212.

It belongs to the cytochrome b family. In terms of assembly, the main subunits of complex b-c1 are: cytochrome b, cytochrome c1 and the Rieske protein. Heme b is required as a cofactor.

Its subcellular location is the cell membrane. In terms of biological role, component of the ubiquinol-cytochrome c reductase complex (complex III or cytochrome b-c1 complex), which is a respiratory chain that generates an electrochemical potential coupled to ATP synthesis. In Paracoccus denitrificans, this protein is Cytochrome b (petB).